Reading from the N-terminus, the 38-residue chain is Zinc-containing ferredoxin (38 aa).

Positions 1–11 are enriched in polar residues; that stretch reads GIDPNFRTSRP. The tract at residues 1 to 38 is disordered; it reads GIDPNFRTSRPVTGDHAGHKVYAPADPPVKEKALGIHG. The N-terminal extension stretch occupies residues 1–38; sequence GIDPNFRTSRPVTGDHAGHKVYAPADPPVKEKALGIHG. Residues His-16 and His-19 each contribute to the Zn(2+) site. The segment covering 28–38 has biased composition (basic and acidic residues); the sequence is PVKEKALGIHG. At Lys-30 the chain carries N6-methyllysine. His-37 contributes to the Zn(2+) binding site.

The cofactor is [3Fe-4S] cluster. Requires [4Fe-4S] cluster as cofactor. Zn(2+) serves as cofactor.

In terms of biological role, ferredoxins are iron-sulfur proteins that transfer electrons in a wide variety of metabolic reactions. The chain is Zinc-containing ferredoxin (zfx) from Metallosphaera prunae.